Here is a 409-residue protein sequence, read N- to C-terminus: NADH-quinone oxidoreductase subunit D (409 aa).

This sequence belongs to the complex I 49 kDa subunit family. NDH-1 is composed of 14 different subunits. Subunits NuoB, C, D, E, F, and G constitute the peripheral sector of the complex.

It localises to the cell inner membrane. The catalysed reaction is a quinone + NADH + 5 H(+)(in) = a quinol + NAD(+) + 4 H(+)(out). Its function is as follows. NDH-1 shuttles electrons from NADH, via FMN and iron-sulfur (Fe-S) centers, to quinones in the respiratory chain. The immediate electron acceptor for the enzyme in this species is believed to be ubiquinone. Couples the redox reaction to proton translocation (for every two electrons transferred, four hydrogen ions are translocated across the cytoplasmic membrane), and thus conserves the redox energy in a proton gradient. This Helicobacter pylori (strain G27) protein is NADH-quinone oxidoreductase subunit D.